Here is a 495-residue protein sequence, read N- to C-terminus: Galactose-1-phosphate uridylyltransferase (495 aa).

This sequence belongs to the galactose-1-phosphate uridylyltransferase type 2 family.

The protein localises to the cytoplasm. The enzyme catalyses alpha-D-galactose 1-phosphate + UDP-alpha-D-glucose = alpha-D-glucose 1-phosphate + UDP-alpha-D-galactose. Its pathway is carbohydrate metabolism; galactose metabolism. This Ligilactobacillus salivarius (strain UCC118) (Lactobacillus salivarius) protein is Galactose-1-phosphate uridylyltransferase.